Reading from the N-terminus, the 72-residue chain is Large ribosomal subunit protein bL31c (72 aa).

This sequence belongs to the bacterial ribosomal protein bL31 family. Type A subfamily. Part of the 50S ribosomal subunit.

The protein localises to the plastid. Its subcellular location is the chloroplast. In terms of biological role, binds the 23S rRNA. The protein is Large ribosomal subunit protein bL31c of Guillardia theta (Cryptophyte).